The sequence spans 260 residues: Acetylglutamate kinase (260 aa).

Substrate is bound by residues 46–47 (GG), arginine 68, and asparagine 160.

The protein belongs to the acetylglutamate kinase family. ArgB subfamily.

The protein localises to the cytoplasm. It catalyses the reaction N-acetyl-L-glutamate + ATP = N-acetyl-L-glutamyl 5-phosphate + ADP. It functions in the pathway amino-acid biosynthesis; L-arginine biosynthesis; N(2)-acetyl-L-ornithine from L-glutamate: step 2/4. Its function is as follows. Catalyzes the ATP-dependent phosphorylation of N-acetyl-L-glutamate. The sequence is that of Acetylglutamate kinase from Shewanella oneidensis (strain ATCC 700550 / JCM 31522 / CIP 106686 / LMG 19005 / NCIMB 14063 / MR-1).